A 106-amino-acid polypeptide reads, in one-letter code: NADH-quinone oxidoreductase subunit K (106 aa).

The next 3 membrane-spanning stretches (helical) occupy residues 10–30 (IHYY…GVMV), 35–55 (VLIF…FVTF), and 67–87 (VVFF…AIVI).

The protein belongs to the complex I subunit 4L family. In terms of assembly, NDH-1 is composed of 14 different subunits. Subunits NuoA, H, J, K, L, M, N constitute the membrane sector of the complex.

Its subcellular location is the cell inner membrane. It catalyses the reaction a quinone + NADH + 5 H(+)(in) = a quinol + NAD(+) + 4 H(+)(out). Functionally, NDH-1 shuttles electrons from NADH, via FMN and iron-sulfur (Fe-S) centers, to quinones in the respiratory chain. The immediate electron acceptor for the enzyme in this species is believed to be ubiquinone. Couples the redox reaction to proton translocation (for every two electrons transferred, four hydrogen ions are translocated across the cytoplasmic membrane), and thus conserves the redox energy in a proton gradient. This chain is NADH-quinone oxidoreductase subunit K, found in Leptospira interrogans serogroup Icterohaemorrhagiae serovar copenhageni (strain Fiocruz L1-130).